A 635-amino-acid polypeptide reads, in one-letter code: Multiple inositol polyphosphate phosphatase 1 (635 aa).

An N-terminal signal peptide occupies residues 1-23 (MMVKIKNIIILFCIFGLLSNVSS). The Extracellular portion of the chain corresponds to 24–565 (LSSSSSSSQS…GNDSHSKKSS (542 aa)). Residues 66–102 (KNGDSNSQGDGSSGNSNSNSNSNSNSNSNSDSSNEPP) are disordered. Positions 67–99 (NGDSNSQGDGSSGNSNSNSNSNSNSNSNSDSSN) are enriched in low complexity. His116 is a catalytic residue. Low complexity predominate over residues 380–421 (SSSSSSSSSSNNGDNSGSNGSSGSGSSTSTSSNDNGSTNNND). The disordered stretch occupies residues 380 to 425 (SSSSSSSSSSNNGDNSGSNGSSGSGSSTSTSSNDNGSTNNNDNKVE). The chain crosses the membrane as a helical span at residues 566 to 586 (YFLAIFIPITFLVGGTIGGIF). The Cytoplasmic segment spans residues 587–635 (TYFSYEKIMQVKNRKKLTQYGNDEFISSPKSKSFSFKPTKFDSRSPLIQ). The span at 614–624 (SPKSKSFSFKP) shows a compositional bias: low complexity. The interval 614 to 635 (SPKSKSFSFKPTKFDSRSPLIQ) is disordered.

The protein belongs to the histidine acid phosphatase family. MINPP1 subfamily.

The protein localises to the membrane. The catalysed reaction is 1D-myo-inositol hexakisphosphate + H2O = 1D-myo-inositol 1,2,4,5,6-pentakisphosphate + phosphate. It catalyses the reaction 1D-myo-inositol 1,2,4,5,6-pentakisphosphate + H2O = 1D-myo-inositol 1,2,5,6-tetrakisphosphate + phosphate. The enzyme catalyses 1D-myo-inositol 1,2,5,6-tetrakisphosphate + H2O = 1D-myo-inositol 1,2,6-trisphosphate + phosphate. It carries out the reaction 1D-myo-inositol 1,2,6-trisphosphate + H2O = 1D-myo-inositol 1,2-bisphosphate + phosphate. The catalysed reaction is 1D-myo-inositol 1,2-bisphosphate + H2O = 1D-myo-inositol 2-phosphate + phosphate. It catalyses the reaction (2R)-2,3-bisphosphoglycerate + H2O = (2R)-2-phosphoglycerate + phosphate. Probable multiple inositol polyphosphate phosphatase that hydrolyzes 1D-myo-inositol 1,3,4,5,6-pentakisphosphate (InsP5[2OH]) and 1D-myo-inositol hexakisphosphate (InsP6) to a range of less phosphorylated inositol phosphates. This regulates the availability of these various small molecule second messengers and metal chelators which control many aspects of cell physiology. May have a dual substrate specificity, and function as a 2,3-bisphosphoglycerate 3-phosphatase hydrolyzing 2,3-bisphosphoglycerate to 2-phosphoglycerate. 2,3-bisphosphoglycerate (BPG) is formed as part of the Rapoport-Luebering glycolytic bypass. In Dictyostelium discoideum (Social amoeba), this protein is Multiple inositol polyphosphate phosphatase 1 (mipp1).